Here is a 430-residue protein sequence, read N- to C-terminus: Histidinol dehydrogenase (430 aa).

Residues tyrosine 130, glutamine 191, and asparagine 214 each contribute to the NAD(+) site. 3 residues coordinate substrate: serine 237, glutamine 259, and histidine 262. Residues glutamine 259 and histidine 262 each coordinate Zn(2+). Catalysis depends on proton acceptor residues glutamate 327 and histidine 328. 4 residues coordinate substrate: histidine 328, aspartate 361, glutamate 415, and histidine 420. Zn(2+) is bound at residue aspartate 361. Zn(2+) is bound at residue histidine 420.

It belongs to the histidinol dehydrogenase family. Zn(2+) serves as cofactor.

It catalyses the reaction L-histidinol + 2 NAD(+) + H2O = L-histidine + 2 NADH + 3 H(+). The protein operates within amino-acid biosynthesis; L-histidine biosynthesis; L-histidine from 5-phospho-alpha-D-ribose 1-diphosphate: step 9/9. Catalyzes the sequential NAD-dependent oxidations of L-histidinol to L-histidinaldehyde and then to L-histidine. This chain is Histidinol dehydrogenase, found in Brucella suis biovar 1 (strain 1330).